Reading from the N-terminus, the 169-residue chain is Probable GPI-anchored adhesin-like protein PGA22 (169 aa).

The first 18 residues, 1–18, serve as a signal peptide directing secretion; it reads MKYSTLAWLVIASYTVFA. 4 N-linked (GlcNAc...) asparagine glycosylation sites follow: Asn87, Asn104, Asn111, and Asn118. Gly140 is lipidated: GPI-anchor amidated glycine. Positions 141–169 are cleaved as a propeptide — removed in mature form; sequence PALTTTTVAEAFSLAAGASLGYLVALLFL.

The protein resides in the cell membrane. Its function is as follows. Putative adhesin which may be involved in cell adhesion and virulence. In Candida albicans (strain SC5314 / ATCC MYA-2876) (Yeast), this protein is Probable GPI-anchored adhesin-like protein PGA22 (PGA22).